A 133-amino-acid chain; its full sequence is Large ribosomal subunit protein bL21 (133 aa).

Positions 1 to 22 are disordered; the sequence is MAEKPAAKPKAAAAKAEAKDQS.

The protein belongs to the bacterial ribosomal protein bL21 family. As to quaternary structure, part of the 50S ribosomal subunit. Contacts protein L20.

In terms of biological role, this protein binds to 23S rRNA in the presence of protein L20. This chain is Large ribosomal subunit protein bL21, found in Prochlorococcus marinus (strain MIT 9303).